We begin with the raw amino-acid sequence, 494 residues long: MGTSGVRFLTLVKPFMFALPEVSSATKKIPVNEKLLWTSIVVFLYLVCCQIPLYGITNTKSSDPFYWMRVILASNKGTLMELGISPIVTSGLVMQLLAGSKIIDVDQGTKEDKTLFQGAQKLLGILITIGESVAYVLSGMYGDVKDLGAGNAILIIVQLFTSGIIVICLDELLQKGYGIGSAISLFIATNVCESIVWKSFSPTTINTGRGTEFEGALVALFQLMITKTDKVRALQEAFYRQNLPNVTNLLATVLVFVLVVYFQGFQVELPITPAKSKGMAGQFYPIKLFYTSNMPIILQTALVSNLYFISQILYKRYPENIIIHILGRWEEPEMSVSGQMRPVGGIAYYISPLNSFAEIVSDPVHALLYIIFILASCALFSKTWIQVSGTSASDVSKQLRDQQMVMKGFRASSMQRELNRYIPTAAAFGGMCIGALSIVADFMGAIGSGTGILLAVTTIYQSWETILLAVTTIYQSWETIRKESRDTDALKMFG.

10 helical membrane-spanning segments follow: residues 36-56, 79-99, 122-142, 147-167, 177-197, 249-269, 294-314, 359-379, 426-446, and 450-470; these read LWTS…LYGI, LMEL…LLAG, LLGI…GMYG, LGAG…IIVI, YGIG…SIVW, LLAT…QVEL, MPII…QILY, IVSD…SCAL, AAFG…MGAI, and TGIL…LLAV.

It belongs to the SecY/SEC61-alpha family. In terms of assembly, heterotrimeric complex composed of SEC61-alpha, SEC61-beta and SEC61-gamma.

The protein localises to the endoplasmic reticulum membrane. Its function is as follows. Appears to play a crucial role in the insertion of secretory and membrane polypeptides into the ER. It is required for assembly of membrane and secretory proteins. The polypeptide is Protein transport protein Sec61 subunit alpha (Pyrenomonas salina).